Reading from the N-terminus, the 1016-residue chain is Kinesin-like protein KIN-14K (1016 aa).

Residues 14-121 (ADRRAEVIEW…CLLVLRESVS (108 aa)) enclose the Calponin-homology (CH) domain. The segment at 123-176 (GLRDGTSKAPLRKKWRVPETGEPLVPGVAQGKTSPGEDKRNGLPDPKSQQKTPI) is disordered. Residues 288 to 354 (VNGTNEENQM…EVMTSMHEQQ (67 aa)) are a coiled coil. One can recognise a Kinesin motor domain in the interval 481-808 (NIRVYCRVRP…LKFAERVSGV (328 aa)). 565–572 (GQTGSGKT) serves as a coordination point for ATP. A coiled-coil region spans residues 820–852 (KDIKELLEQVASLKDTIVRKDTEIEQLQLMKDK). Composition is skewed to polar residues over residues 884 to 893 (NQQSQLSDPQ) and 990 to 1004 (KTPNQTRVQSSQLIG). Disordered regions lie at residues 884–912 (NQQSQLSDPQSYAEVNRDGGPTSYTDITP) and 971–1016 (LTKN…RWQK).

This sequence belongs to the TRAFAC class myosin-kinesin ATPase superfamily. Kinesin family. KIN-14 subfamily.

This chain is Kinesin-like protein KIN-14K, found in Oryza sativa subsp. japonica (Rice).